Here is a 269-residue protein sequence, read N- to C-terminus: Undecaprenyl-diphosphatase (269 aa).

8 consecutive transmembrane segments (helical) span residues Ile4–Ile24, Leu50–Leu70, Leu86–Leu106, Ala113–Leu133, Val146–Ile166, Ala186–Leu206, Trp220–Leu240, and Leu246–Ala266.

Belongs to the UppP family.

The protein localises to the cell membrane. The enzyme catalyses di-trans,octa-cis-undecaprenyl diphosphate + H2O = di-trans,octa-cis-undecaprenyl phosphate + phosphate + H(+). In terms of biological role, catalyzes the dephosphorylation of undecaprenyl diphosphate (UPP). The protein is Undecaprenyl-diphosphatase of Methanopyrus kandleri (strain AV19 / DSM 6324 / JCM 9639 / NBRC 100938).